The primary structure comprises 496 residues: Ribose import ATP-binding protein RbsA (496 aa).

2 ABC transporter domains span residues 3-239 (IVME…VGRE) and 246-493 (ERTP…TGGN). Residue 35 to 42 (GENGAGKS) participates in ATP binding.

This sequence belongs to the ABC transporter superfamily. Ribose importer (TC 3.A.1.2.1) family. In terms of assembly, the complex is composed of an ATP-binding protein (RbsA), two transmembrane proteins (RbsC) and a solute-binding protein (RbsB).

It is found in the cell membrane. It catalyses the reaction D-ribose(out) + ATP + H2O = D-ribose(in) + ADP + phosphate + H(+). In terms of biological role, part of the ABC transporter complex RbsABC involved in ribose import. Responsible for energy coupling to the transport system. The protein is Ribose import ATP-binding protein RbsA of Oceanobacillus iheyensis (strain DSM 14371 / CIP 107618 / JCM 11309 / KCTC 3954 / HTE831).